Here is a 130-residue protein sequence, read N- to C-terminus: Small ribosomal subunit protein uS11 (130 aa).

The protein belongs to the universal ribosomal protein uS11 family. Part of the 30S ribosomal subunit.

In terms of biological role, located on the platform of the 30S subunit. This Nanoarchaeum equitans (strain Kin4-M) protein is Small ribosomal subunit protein uS11.